Consider the following 516-residue polypeptide: Maturase K (516 aa).

It belongs to the intron maturase 2 family. MatK subfamily.

The protein resides in the plastid. It is found in the chloroplast. Usually encoded in the trnK tRNA gene intron. Probably assists in splicing its own and other chloroplast group II introns. This Chara connivens (Convergent stonewort) protein is Maturase K.